A 457-amino-acid polypeptide reads, in one-letter code: Siroheme synthase (457 aa).

The segment at 1–204 is precorrin-2 dehydrogenase /sirohydrochlorin ferrochelatase; sequence MDHLPIFCQL…ADEKAVNATT (204 aa). Residues 22–23 and 43–44 contribute to the NAD(+) site; these read DV and LT. Phosphoserine is present on Ser128. The tract at residues 216-457 is uroporphyrinogen-III C-methyltransferase; the sequence is GEVVLVGAGP…RDKLNWFSNY (242 aa). Pro225 contacts S-adenosyl-L-methionine. Asp248 (proton acceptor) is an active-site residue. Lys270 functions as the Proton donor in the catalytic mechanism. S-adenosyl-L-methionine-binding positions include 301-303, Ile306, 331-332, Met382, and Gly411; these read GGD and TA.

It in the N-terminal section; belongs to the precorrin-2 dehydrogenase / sirohydrochlorin ferrochelatase family. The protein in the C-terminal section; belongs to the precorrin methyltransferase family.

It catalyses the reaction uroporphyrinogen III + 2 S-adenosyl-L-methionine = precorrin-2 + 2 S-adenosyl-L-homocysteine + H(+). It carries out the reaction precorrin-2 + NAD(+) = sirohydrochlorin + NADH + 2 H(+). The catalysed reaction is siroheme + 2 H(+) = sirohydrochlorin + Fe(2+). It participates in cofactor biosynthesis; adenosylcobalamin biosynthesis; precorrin-2 from uroporphyrinogen III: step 1/1. The protein operates within cofactor biosynthesis; adenosylcobalamin biosynthesis; sirohydrochlorin from precorrin-2: step 1/1. It functions in the pathway porphyrin-containing compound metabolism; siroheme biosynthesis; precorrin-2 from uroporphyrinogen III: step 1/1. Its pathway is porphyrin-containing compound metabolism; siroheme biosynthesis; siroheme from sirohydrochlorin: step 1/1. It participates in porphyrin-containing compound metabolism; siroheme biosynthesis; sirohydrochlorin from precorrin-2: step 1/1. Functionally, multifunctional enzyme that catalyzes the SAM-dependent methylations of uroporphyrinogen III at position C-2 and C-7 to form precorrin-2 via precorrin-1. Then it catalyzes the NAD-dependent ring dehydrogenation of precorrin-2 to yield sirohydrochlorin. Finally, it catalyzes the ferrochelation of sirohydrochlorin to yield siroheme. This is Siroheme synthase from Salmonella heidelberg (strain SL476).